The sequence spans 427 residues: Enolase (427 aa).

Gln163 contacts (2R)-2-phosphoglycerate. Glu205 functions as the Proton donor in the catalytic mechanism. The Mg(2+) site is built by Asp242, Glu285, and Asp312. (2R)-2-phosphoglycerate contacts are provided by Lys337, Arg366, Ser367, and Lys388. Lys337 serves as the catalytic Proton acceptor.

It belongs to the enolase family. Mg(2+) serves as cofactor.

It is found in the cytoplasm. Its subcellular location is the secreted. The protein resides in the cell surface. The catalysed reaction is (2R)-2-phosphoglycerate = phosphoenolpyruvate + H2O. It participates in carbohydrate degradation; glycolysis; pyruvate from D-glyceraldehyde 3-phosphate: step 4/5. Its function is as follows. Catalyzes the reversible conversion of 2-phosphoglycerate (2-PG) into phosphoenolpyruvate (PEP). It is essential for the degradation of carbohydrates via glycolysis. This is Enolase from Rhodopseudomonas palustris (strain BisA53).